A 106-amino-acid polypeptide reads, in one-letter code: UPF0145 protein Csac_0771 (106 aa).

It belongs to the UPF0145 family.

The chain is UPF0145 protein Csac_0771 from Caldicellulosiruptor saccharolyticus (strain ATCC 43494 / DSM 8903 / Tp8T 6331).